The primary structure comprises 599 residues: Elongation factor 4 (599 aa).

The region spanning asparagine 5–glutamate 187 is the tr-type G domain. Residues aspartate 17–threonine 22 and asparagine 134–aspartate 137 each bind GTP.

Belongs to the TRAFAC class translation factor GTPase superfamily. Classic translation factor GTPase family. LepA subfamily.

Its subcellular location is the cell inner membrane. It carries out the reaction GTP + H2O = GDP + phosphate + H(+). Functionally, required for accurate and efficient protein synthesis under certain stress conditions. May act as a fidelity factor of the translation reaction, by catalyzing a one-codon backward translocation of tRNAs on improperly translocated ribosomes. Back-translocation proceeds from a post-translocation (POST) complex to a pre-translocation (PRE) complex, thus giving elongation factor G a second chance to translocate the tRNAs correctly. Binds to ribosomes in a GTP-dependent manner. The protein is Elongation factor 4 of Hahella chejuensis (strain KCTC 2396).